The following is a 311-amino-acid chain: Burkholderia TALE-like protein 3 (311 aa).

Residues 19–50 (LSPFECLKIEKHSGGADALEFISNKYDALTQV) form a Cryptic repeat -1 repeat. A Cryptic repeat 0 repeat occupies 51–83 (LSRADILKIACHDCAAHALQAVLDYEQVFRQRG). 6 Core repeat repeats span residues 84–116 (FARA…NECG), 117–149 (FSQA…NERD), 150–182 (YSGA…CESG), 183–215 (YSGA…CERG), 216–248 (YCRT…CERG), and 249–281 (YSRT…TQAG). The stretch at 282–311 (RSNEDIVNMAARTGAAGQIRKMAAQLSGRQ) is one Cryptic repeat +1 repeat.

This sequence belongs to the transcription activator-like effector (TALE) family. Bat subfamily.

Its function is as follows. Does not bind DNA, probably because it has too few core repeats. The polypeptide is Burkholderia TALE-like protein 3 (Mycetohabitans rhizoxinica (strain DSM 19002 / CIP 109453 / HKI 454) (Paraburkholderia rhizoxinica)).